The chain runs to 394 residues: Venom metalloproteinase antarease TserMP_A (394 aa).

The N-terminal stretch at 1–16 (MISYLASIFLLATVSA) is a signal peptide. The propeptide occupies 17 to 157 (VPSGRVEVVF…NAENVSRMAR (141 aa)). In terms of domain architecture, Peptidase M12B spans 162–391 (IVVEYYIVTD…PTASCIFQQC (230 aa)). The cysteines at positions 295 and 386 are disulfide-linked. Position 319 (histidine 319) interacts with Zn(2+). The active site involves glutamate 320. Zn(2+) contacts are provided by histidine 323 and histidine 329.

Zn(2+) serves as cofactor. Contains 4 disulfide bonds. In terms of tissue distribution, expressed by the venom gland.

The protein localises to the secreted. Its activity is regulated as follows. Inhibited by EDTA. In terms of biological role, acts as a metalloprotease. Penetrates intact tissue and specifically cleaves the vesicle-associated membrane protein 2 (VAMP2) (part of the SNARE complex) involved in pancreatic secretion, thus disrupting the normal vesicular traffic. The polypeptide is Venom metalloproteinase antarease TserMP_A (Tityus serrulatus (Brazilian scorpion)).